Reading from the N-terminus, the 301-residue chain is Rhodopsin (301 aa).

Residues 1-18 (LHMIHLHWYQYPPMNPMM) are Extracellular-facing. The chain crosses the membrane as a helical span at residues 19–43 (YPLLLIFMFITGIPCLAGNFVTIWV). Residues 44-55 (FMTTKSLRSPAN) lie on the Cytoplasmic side of the membrane. Residues 56 to 78 (LLVVNLAMSDFLMMFTMFPPMMI) form a helical membrane-spanning segment. At 79–92 (TCYYHTWTLGPTFC) the chain is on the extracellular side. An intrachain disulfide couples Cys-92 to Cys-169. A helical transmembrane segment spans residues 93–115 (QVYAFLGNLFGCTSIWTMVFITF). A 'Ionic lock' involved in activated form stabilization motif is present at residues 116–118 (DRY). Residues 116 to 134 (DRYNVIVKGVAGEPLSNKK) are Cytoplasmic-facing. A helical membrane pass occupies residues 135–155 (AALWILSAWVLSFSWCSAPFF). At 156 to 182 (GWNRYVPEGNLTGCGTDYLSEDALSRS) the chain is on the extracellular side. An N-linked (GlcNAc...) asparagine glycan is attached at Asn-165. A helical membrane pass occupies residues 183 to 204 (YLYVYSVWVYFLPLLITIYCYV). Residues 205-245 (FIIKAVAAHEKGMRDQAKKMGIKSLRNEEAQKTSAECRLAK) lie on the Cytoplasmic side of the membrane. Residues 246–267 (IAMTTVALWFIAWTPYLLINWV) traverse the membrane as a helical segment. The Extracellular portion of the chain corresponds to 268–278 (GMFARSYLSPV). Residues 279-300 (YTIWGYVFAKANAVYNPIVYAI) traverse the membrane as a helical segment. Lys-288 is modified (N6-(retinylidene)lysine).

Belongs to the G-protein coupled receptor 1 family. Opsin subfamily. Homodimer. Interacts with GNAQ. In terms of processing, contains one covalently linked retinal chromophore.

The protein localises to the cell projection. Its subcellular location is the rhabdomere membrane. In terms of biological role, photoreceptor required for image-forming vision at low light intensity. Can use both retinal and 3-dehydroretinal as visual pigment. Light-induced isomerization of 11-cis to all-trans retinal triggers a conformational change that activates signaling via G-proteins. Signaling via GNAQ probably mediates the activation of phospholipase C. This chain is Rhodopsin (RHO), found in Cambarellus shufeldtii (Cajun dwarf crayfish).